Consider the following 486-residue polypeptide: MTQYIQGQWLAGEGHEINSKNPANGDVIWQGNTATATQVNAAVDAARAAQFDWFMLGYEARLAIVEAYRAQLEANKAEIAETIAQETGKPQWETATEVGAMIGKIALSAKAHDKRTGTETNDLPAGRAVLRHKPHGVVAVFGPYNFPGHLPNGHIVPALLAGNTVVFKPSELTPKVAELMLKCWDKAGLPQGVVNLVQGEVETGKALASHPQIDGLFFTGSSRTGHILHEQYAGLPGKILALEMGGNNPLIVKGVTDTKAAVHDIIQSAYISSGQRCTCARRLYIEEGAQGDALIAELVKAIKQIKVGAWNVQPQPFMGSMISETAARGMVAAQATLQSLGGVSLVELVQVEAGTGLVTPGLIDVTKVAELPDEEYFGPLLQLVRYSDFDQAIHLANATRYGLSAGLLADSREDYDYFLARIRAGIVNWNKQITGASGAAPFGGVGASGNHRASAFYAADYCAYPVASMEADAVSLPATLSPGLSI.

An NAD(+)-binding site is contributed by 220-225 (GSSRTG). Active-site residues include glutamate 243 and cysteine 277.

This sequence belongs to the aldehyde dehydrogenase family. AstD subfamily.

It catalyses the reaction N-succinyl-L-glutamate 5-semialdehyde + NAD(+) + H2O = N-succinyl-L-glutamate + NADH + 2 H(+). Its pathway is amino-acid degradation; L-arginine degradation via AST pathway; L-glutamate and succinate from L-arginine: step 4/5. In terms of biological role, catalyzes the NAD-dependent reduction of succinylglutamate semialdehyde into succinylglutamate. In Shewanella frigidimarina (strain NCIMB 400), this protein is N-succinylglutamate 5-semialdehyde dehydrogenase.